The following is a 90-amino-acid chain: Small ribosomal subunit protein uS15c (90 aa).

Belongs to the universal ribosomal protein uS15 family. As to quaternary structure, part of the 30S ribosomal subunit.

Its subcellular location is the plastid. It is found in the chloroplast. The polypeptide is Small ribosomal subunit protein uS15c (rps15) (Gossypium barbadense (Sea Island cotton)).